A 776-amino-acid chain; its full sequence is Ion-translocating oxidoreductase complex subunit C (776 aa).

2 4Fe-4S ferredoxin-type domains span residues 368-397 and 407-436; these read MGAP…QQLY and KATA…VQYF. The [4Fe-4S] cluster site is built by Cys377, Cys380, Cys383, Cys387, Cys416, Cys419, Cys422, and Cys426. Basic and acidic residues-rich tracts occupy residues 534–543, 597–611, 633–647, 669–683, and 705–719; these read ARARQAEKVQ, ADEK…RKAA, and ADEK…RKAT. Residues 534 to 754 form a disordered region; sequence ARARQAEKVQ…ENEAEDPRKA (221 aa). The span at 721–743 shows a compositional bias: low complexity; the sequence is EAAIARAKARKAAQAGERAQAAN.

This sequence belongs to the 4Fe4S bacterial-type ferredoxin family. RnfC subfamily. The complex is composed of six subunits: RnfA, RnfB, RnfC, RnfD, RnfE and RnfG. Requires [4Fe-4S] cluster as cofactor.

It localises to the cell inner membrane. In terms of biological role, part of a membrane-bound complex that couples electron transfer with translocation of ions across the membrane. In Cronobacter sakazakii (strain ATCC BAA-894) (Enterobacter sakazakii), this protein is Ion-translocating oxidoreductase complex subunit C.